The sequence spans 417 residues: Phosphoglycerate kinase (417 aa).

(2R)-3-phosphoglycerate-binding residues include V23, D24, F25, N26, Q38, R39, S62, H63, G65, R66, L122, R123, H170, and R171. G214 contacts ADP. G214 serves as a coordination point for CDP. Residues A215 and K216 each coordinate AMP. A215 provides a ligand contact to ATP. A215 provides a ligand contact to Mg(2+). CDP is bound at residue D219. D219 contacts Mg(2+). K220 serves as a coordination point for AMP. K220 contacts ATP. G238 lines the ADP pocket. G238 contributes to the CDP binding site. Residues G239 and G313 each contribute to the AMP site. The ATP site is built by G239 and G313. CDP is bound by residues G338, V340, and F343. Residue F343 coordinates ADP. E344 is a binding site for AMP. 3 residues coordinate ATP: E344, D375, and T376. D375 provides a ligand contact to Mg(2+).

The protein belongs to the phosphoglycerate kinase family. Monomer. The cofactor is Mg(2+).

It localises to the cytoplasm. The catalysed reaction is (2R)-3-phosphoglycerate + ATP = (2R)-3-phospho-glyceroyl phosphate + ADP. The protein operates within carbohydrate degradation; glycolysis; pyruvate from D-glyceraldehyde 3-phosphate: step 2/5. In terms of biological role, catalyzes one of the two ATP producing reactions in the glycolytic pathway via the reversible conversion of 1,3-diphosphoglycerate to 3-phosphoglycerate. In addition to its role as a glycolytic enzyme, it seems that PGK-1 acts as a polymerase alpha cofactor protein (primer recognition protein). May play a role in sperm motility. This Gallus gallus (Chicken) protein is Phosphoglycerate kinase (PGK).